Reading from the N-terminus, the 1207-residue chain is Ras GTPase-activating protein gap-2 (1207 aa).

2 disordered regions span residues 1 to 29 (MKVI…SCTK) and 221 to 316 (RMSS…GSLR). Positions 40-383 (PPICHGWLIV…WMENLRKTMN (344 aa)) constitute a PH domain. Over residues 223-236 (SSSSHNLSTRLSGS) the composition is skewed to low complexity. Composition is skewed to polar residues over residues 237–247 (TQNLNQPTNAY) and 286–297 (ASNTPSRDSSLY). Positions 374-490 (WMENLRKTMN…SSRSPVERWY (117 aa)) constitute a C2 domain. Polar residues predominate over residues 495–504 (SHSDSGTSRI). The disordered stretch occupies residues 495 to 516 (SHSDSGTSRIASALGGKSSSQE). One can recognise a Ras-GAP domain in the interval 579 to 789 (NLAKEFLCDL…HRMKDFLLRI (211 aa)). Disordered regions lie at residues 856-903 (GVFH…LGRS), 923-1013 (FQTP…SSSS), 1086-1107 (ATGG…RASR), and 1163-1207 (LKSK…VVPN). Polar residues-rich tracts occupy residues 862 to 876 (MVQQ…SPQQ) and 891 to 903 (TPPT…LGRS). The segment covering 939-953 (TGTSSSRTSDKTTSS) has biased composition (low complexity). The segment covering 955-972 (EIRDDTDSDFELREDRGR) has biased composition (basic and acidic residues). Residues 985–1013 (ASPSSSQQASSGYLSNNPSRSSYSNSSSS) show a composition bias toward low complexity. Residues 1181-1207 (SGASEDSYDSLSSLDRPSRQSLVVVPN) show a composition bias toward low complexity.

In terms of tissue distribution, mainly expressed in gonads and vulval cells. Isoform c in expressed in pharyngeal epithelial cells and several rectal/blast cells in the tail region. Isoform f is weakly expressed in four cells symmetrically located in the vulval region. Isoform g is strongly expressed in the pharyngeal muscle cells m6 in addition to several cells in the tail region.

It is found in the cytoplasm. GTPase-activating protein, which acts as a negative regulator for the member of the Ras family let-60. Probably decreases the signaling activity of Ras by stimulating its intrinsic GTPase activity, thereby lowering the levels of GTP-bound, active Ras. The different isoforms may play a distinct role in specific tissues. This chain is Ras GTPase-activating protein gap-2 (gap-2), found in Caenorhabditis elegans.